The following is a 411-amino-acid chain: tRNA pseudouridine synthase Pus10 (411 aa).

The THUMP domain maps to 65–192 (ALAKCHLPTR…SGQVKVVRNP (128 aa)). The Nucleophile role is filled by D244. Residues Y305 and Y376 each contribute to the substrate site.

This sequence belongs to the pseudouridine synthase Pus10 family.

It carries out the reaction uridine(54) in tRNA = pseudouridine(54) in tRNA. The enzyme catalyses uridine(55) in tRNA = pseudouridine(55) in tRNA. Functionally, responsible for synthesis of pseudouridine from uracil-54 and uracil-55 in the psi GC loop of transfer RNAs. The sequence is that of tRNA pseudouridine synthase Pus10 from Pyrobaculum arsenaticum (strain DSM 13514 / JCM 11321 / PZ6).